The chain runs to 476 residues: Aspartyl/glutamyl-tRNA(Asn/Gln) amidotransferase subunit B (476 aa).

Belongs to the GatB/GatE family. GatB subfamily. As to quaternary structure, heterotrimer of A, B and C subunits.

It catalyses the reaction L-glutamyl-tRNA(Gln) + L-glutamine + ATP + H2O = L-glutaminyl-tRNA(Gln) + L-glutamate + ADP + phosphate + H(+). It carries out the reaction L-aspartyl-tRNA(Asn) + L-glutamine + ATP + H2O = L-asparaginyl-tRNA(Asn) + L-glutamate + ADP + phosphate + 2 H(+). In terms of biological role, allows the formation of correctly charged Asn-tRNA(Asn) or Gln-tRNA(Gln) through the transamidation of misacylated Asp-tRNA(Asn) or Glu-tRNA(Gln) in organisms which lack either or both of asparaginyl-tRNA or glutaminyl-tRNA synthetases. The reaction takes place in the presence of glutamine and ATP through an activated phospho-Asp-tRNA(Asn) or phospho-Glu-tRNA(Gln). The chain is Aspartyl/glutamyl-tRNA(Asn/Gln) amidotransferase subunit B from Geobacillus kaustophilus (strain HTA426).